The following is a 379-amino-acid chain: Homoserine O-succinyltransferase (379 aa).

Residues 51–360 form the AB hydrolase-1 domain; that stretch reads NAVLICHALS…DAPQGHDAFL (310 aa). S157 (nucleophile) is an active-site residue. Residue R227 coordinates substrate. Active-site residues include D323 and H356. D357 serves as a coordination point for substrate.

Belongs to the AB hydrolase superfamily. MetX family. In terms of assembly, homodimer.

The protein localises to the cytoplasm. It catalyses the reaction L-homoserine + succinyl-CoA = O-succinyl-L-homoserine + CoA. It functions in the pathway amino-acid biosynthesis; L-methionine biosynthesis via de novo pathway; O-succinyl-L-homoserine from L-homoserine: step 1/1. Functionally, transfers a succinyl group from succinyl-CoA to L-homoserine, forming succinyl-L-homoserine. This Ectopseudomonas mendocina (strain ymp) (Pseudomonas mendocina) protein is Homoserine O-succinyltransferase.